Consider the following 689-residue polypeptide: Glycine--tRNA ligase beta subunit (689 aa).

It belongs to the class-II aminoacyl-tRNA synthetase family. Tetramer of two alpha and two beta subunits.

It localises to the cytoplasm. The enzyme catalyses tRNA(Gly) + glycine + ATP = glycyl-tRNA(Gly) + AMP + diphosphate. In Shigella boydii serotype 4 (strain Sb227), this protein is Glycine--tRNA ligase beta subunit.